Here is a 302-residue protein sequence, read N- to C-terminus: tRNA-cytidine(32) 2-sulfurtransferase (302 aa).

The short motif at 43 to 48 (SGGKDS) is the PP-loop motif element. Residues Cys118, Cys121, and Cys209 each contribute to the [4Fe-4S] cluster site.

Belongs to the TtcA family. Homodimer. Mg(2+) is required as a cofactor. [4Fe-4S] cluster serves as cofactor.

It localises to the cytoplasm. It catalyses the reaction cytidine(32) in tRNA + S-sulfanyl-L-cysteinyl-[cysteine desulfurase] + AH2 + ATP = 2-thiocytidine(32) in tRNA + L-cysteinyl-[cysteine desulfurase] + A + AMP + diphosphate + H(+). Its pathway is tRNA modification. In terms of biological role, catalyzes the ATP-dependent 2-thiolation of cytidine in position 32 of tRNA, to form 2-thiocytidine (s(2)C32). The sulfur atoms are provided by the cysteine/cysteine desulfurase (IscS) system. The polypeptide is tRNA-cytidine(32) 2-sulfurtransferase (Polynucleobacter asymbioticus (strain DSM 18221 / CIP 109841 / QLW-P1DMWA-1) (Polynucleobacter necessarius subsp. asymbioticus)).